The sequence spans 1024 residues: Multidrug resistance protein MdtC (1024 aa).

12 consecutive transmembrane segments (helical) span residues Val12–Leu32, Glu333–Leu353, Leu360–Cys380, Leu387–Leu407, Val435–Leu455, Val469–Leu489, Trp528–Pro548, Leu853–Ser873, Val875–Leu895, Leu897–Val917, Pro953–Gly973, and Ile984–Ile1004.

Belongs to the resistance-nodulation-cell division (RND) (TC 2.A.6) family. MdtC subfamily. Part of a tripartite efflux system composed of MdtA, MdtB and MdtC. MdtC forms a heteromultimer with MdtB.

The protein resides in the cell inner membrane. This chain is Multidrug resistance protein MdtC, found in Yersinia pseudotuberculosis serotype O:1b (strain IP 31758).